The chain runs to 249 residues: Tryptophan synthase alpha chain (249 aa).

Active-site proton acceptor residues include glutamate 43 and aspartate 54.

It belongs to the TrpA family. As to quaternary structure, tetramer of two alpha and two beta chains.

It carries out the reaction (1S,2R)-1-C-(indol-3-yl)glycerol 3-phosphate + L-serine = D-glyceraldehyde 3-phosphate + L-tryptophan + H2O. The protein operates within amino-acid biosynthesis; L-tryptophan biosynthesis; L-tryptophan from chorismate: step 5/5. Its function is as follows. The alpha subunit is responsible for the aldol cleavage of indoleglycerol phosphate to indole and glyceraldehyde 3-phosphate. This Campylobacter jejuni subsp. jejuni serotype O:6 (strain 81116 / NCTC 11828) protein is Tryptophan synthase alpha chain.